The primary structure comprises 365 residues: Potassium channel subfamily K member 9 (365 aa).

Residues 1–8 (MKKQNVRT) are Cytoplasmic-facing. A helical transmembrane segment spans residues 9–29 (LSLIACTFTYLLVGAAVFDAL). Topologically, residues 30–88 (ESDHEMREEEKLKAEEIRIRGKYNISTEDYRQLELVILQSEPHRAGVQWKFAGSFYFAI) are extracellular. Residue Asn53 is glycosylated (N-linked (GlcNAc...) asparagine). The segment at residues 89–101 (TVITTIGYGHAAP) is an intramembrane region (pore-forming). 4 residues coordinate K(+): Thr93, Ile94, Gly95, and Tyr96. A selectivity filter 1 region spans residues 93 to 98 (TIGYGH). Residues 102–107 (GTDAGK) are Extracellular-facing. A helical membrane pass occupies residues 108–128 (AFCMFYAVLGIPLTLVMFQSL). Over 129 to 158 (GERMNTFVRYLLKRIKKCCGMRNTEVSMEN) the chain is Cytoplasmic. The helical transmembrane segment at 159 to 179 (MVTVGFFSCMGTLCIGAAAFS) threads the bilayer. The Extracellular segment spans residues 180–194 (QCEEWSFFHAYYYCF). The pore-forming intramembrane region spans 195 to 207 (ITLTTIGFGDYVA). Residues Thr199, Ile200, Gly201, and Phe202 each coordinate K(+). Residues 199-204 (TIGFGD) form a selectivity filter 2 region. Over 208–218 (LQSKGALQRKP) the chain is Extracellular. A helical transmembrane segment spans residues 219-239 (FYVAFSFMYILVGLTVIGAFL). At 240–365 (NLVVLRFLTM…HRLMLRRKSV (126 aa)) the chain is on the cytoplasmic side. The X-gate stretch occupies residues 243 to 248 (VLRFLT).

The protein belongs to the two pore domain potassium channel (TC 1.A.1.8) family. As to quaternary structure, homodimer. Heterodimer with KCNK1. Heterodimer with KCNK3. Highly expressed in the brain.

Its subcellular location is the cell membrane. The protein resides in the mitochondrion inner membrane. The protein localises to the cell projection. It is found in the dendrite. The catalysed reaction is K(+)(in) = K(+)(out). The enzyme catalyses Na(+)(in) = Na(+)(out). Its activity is regulated as follows. Inhibited by extracellular acidification. Its function is as follows. K(+) channel that conducts voltage-dependent outward rectifying currents upon membrane depolarization. Voltage sensing is coupled to K(+) electrochemical gradient in an 'ion flux gating' mode where outward but not inward ion flow opens the gate. Changes ion selectivity and becomes permeable to Na(+) ions in response to extracellular acidification. Protonation of the pH sensor His-98 stabilizes C-type inactivation conformation likely converting the channel from outward K(+)-conducting, to inward Na(+)-conducting to nonconductive state. Homo- and heterodimerizes to form functional channels with distinct regulatory and gating properties. Allows K(+) currents with fast-gating kinetics important for the repolarization and hyperpolarization phases of action potentials. In granule neurons, hyperpolarizes the resting membrane potential to limit intrinsic neuronal excitability, but once the action potential threshold is reached, supports high-frequency action potential firing and increased neuronal excitability. Homomeric and/or heteromeric KCNK3:KCNK9 channels operate in cerebellar granule cells, whereas heteromeric KCNK1:KCNK9 enables currents in hippocampal dentate gyrus granule neurons. Dispensable for central chemosensory respiration i.e. breathing controlled by brainstem CO2/pH, it rather conducts pH-sensitive currents and controls the firing rate of serotonergic raphe neurons involved in potentiation of the respiratory chemoreflex. In retinal ganglion cells, mediates outward rectifying currents that regulate action potentials in response to acidification of the synaptic cleft. Involved in transmission of image-forming and nonimage-forming visual information in the retina. In adrenal gland, contributes to the maintenance of a hyperpolarized resting membrane potential of aldosterone-producing cells at zona glomerulosa and limits aldosterone release as part of a regulatory mechanism that controls arterial blood pressure and electrolyte homeostasis. The sequence is that of Potassium channel subfamily K member 9 (KCNK9) from Cavia porcellus (Guinea pig).